The sequence spans 375 residues: Negative elongation factor E (375 aa).

The stretch at Gly7–Ser36 forms a coiled coil. Residues Leu30–Thr58 form a disordered region. The residue at position 51 (Ser51) is a Phosphoserine. A Glycyl lysine isopeptide (Lys-Gly) (interchain with G-Cter in SUMO1); alternate cross-link involves residue Lys78. Lys78 participates in a covalent cross-link: Glycyl lysine isopeptide (Lys-Gly) (interchain with G-Cter in SUMO2); alternate. Positions Ala79–Pro262 are disordered. Lys82 is covalently cross-linked (Glycyl lysine isopeptide (Lys-Gly) (interchain with G-Cter in SUMO2)). Basic and acidic residues predominate over residues Arg90 to Lys101. Ser113 and Ser115 each carry phosphoserine. Glu122 bears the PolyADP-ribosyl glutamic acid mark. Residues Ser131 and Ser139 each carry the phosphoserine modification. Glu151 carries the post-translational modification PolyADP-ribosyl glutamic acid. The segment covering Ala155 to Asp167 has biased composition (low complexity). Glu172 is subject to PolyADP-ribosyl glutamic acid. Phosphoserine is present on residues Ser179, Ser181, Ser185, and Ser187. 4 repeat units span residues Arg184 to Ser185, Arg186 to Ser187, Arg188 to Asp189, and Arg190 to Ser191. The interval Arg184–Glu247 is 32 X 2 AA approximate tandem repeats of R-[DSE]. A compositionally biased stretch (basic and acidic residues) spans Arg186–Arg260. Phosphoserine is present on Ser191. A 5; approximate repeat occupies His192 to Asp193. A run of 4 repeats spans residues Arg194 to Ser195, Arg196 to Asp197, Arg198 to Asp199, and Arg200 to Asp201. The 10; approximate repeat unit spans residues Lys202–Glu203. 7 tandem repeats follow at residues Arg204–Asp205, Arg206–Asp207, Arg208–Asp209, Arg210–Asp211, Arg212–Asp213, Arg214–Asp215, and Arg216–Asp217. Residues Lys218–Asp219 form an 18; approximate repeat. Residues Lys220–Asp221 form a 19; approximate repeat. Repeat copies occupy residues Arg222–Asp223, Arg224–Asp225, Arg226–Asp227, and Arg228–Asp229. A 24; approximate repeat occupies Lys230 to Glu231. 8 consecutive repeat copies span residues Arg232–Asp233, Arg234–Asp235, Arg236–Asp237, Arg238–Asp239, Arg240–Asp241, Arg242–Glu243, Arg244–Asp245, and Arg246–Glu247. Phosphoserine is present on residues Ser253 and Ser255. One can recognise an RRM domain in the interval Asn266–Lys336. Phosphothreonine is present on residues Thr276 and Thr278. 2 positions are modified to phosphoserine: Ser285 and Ser357.

Belongs to the RRM NELF-E family. In terms of assembly, the NELF complex is composed of NELFA, NELFB, NELFCD and NELFE. Interacts with NELFB. Post-translationally, phosphorylated by the P-TEFb complex at sites next to its RNA recognition motif, promoting its release from chromatin. In terms of processing, sumoylated. Poly-ADP-ribosylated by PARP1, thereby preventing RNA-binding and relieving transcription pausing.

It localises to the nucleus. It is found in the chromosome. Essential component of the NELF complex, a complex that negatively regulates the elongation of transcription by RNA polymerase II. The NELF complex, which acts via an association with the DSIF complex and causes transcriptional pausing, is counteracted by the P-TEFb kinase complex. Provides the strongest RNA binding activity of the NELF complex and may initially recruit the NELF complex to RNA. This Mus musculus (Mouse) protein is Negative elongation factor E (Nelfe).